A 391-amino-acid chain; its full sequence is Processive diacylglycerol beta-glucosyltransferase (391 aa).

Belongs to the glycosyltransferase 28 family. UgtP subfamily.

Its subcellular location is the cell membrane. It catalyses the reaction a 1,2-diacyl-3-O-(beta-D-glucopyranosyl)-sn-glycerol + UDP-alpha-D-glucose = a 1,2-diacyl-3-O-(beta-D-Glc-(1-&gt;6)-beta-D-Glc)-sn-glycerol + UDP + H(+). It carries out the reaction a 1,2-diacyl-sn-glycerol + UDP-alpha-D-glucose = a 1,2-diacyl-3-O-(beta-D-glucopyranosyl)-sn-glycerol + UDP + H(+). The protein operates within glycolipid metabolism; diglucosyl-diacylglycerol biosynthesis. In terms of biological role, processive glucosyltransferase involved in the biosynthesis of both the bilayer- and non-bilayer-forming membrane glucolipids. Is able to successively transfer two glucosyl residues to diacylglycerol (DAG), thereby catalyzing the formation of beta-monoglucosyl-DAG (3-O-(beta-D-glucopyranosyl)-1,2-diacyl-sn-glycerol) and beta-diglucosyl-DAG (3-O-(beta-D-glucopyranosyl-beta-(1-&gt;6)-D-glucopyranosyl)-1,2-diacyl-sn-glycerol). Beta-diglucosyl-DAG is the predominant glycolipid found in Bacillales and is also used as a membrane anchor for lipoteichoic acid (LTA). The polypeptide is Processive diacylglycerol beta-glucosyltransferase (Staphylococcus epidermidis (strain ATCC 35984 / DSM 28319 / BCRC 17069 / CCUG 31568 / BM 3577 / RP62A)).